Reading from the N-terminus, the 227-residue chain is NAD(P)H-quinone oxidoreductase subunit K, chloroplastic (227 aa).

Positions 43, 44, 108, and 139 each coordinate [4Fe-4S] cluster. Positions 173-192 are enriched in polar residues; it reads RSFTTNHKFQVGRSSHTGNY. A disordered region spans residues 173 to 201; the sequence is RSFTTNHKFQVGRSSHTGNYDQGFLSKPP.

Belongs to the complex I 20 kDa subunit family. NDH is composed of at least 16 different subunits, 5 of which are encoded in the nucleus. Requires [4Fe-4S] cluster as cofactor.

It localises to the plastid. Its subcellular location is the chloroplast thylakoid membrane. It catalyses the reaction a plastoquinone + NADH + (n+1) H(+)(in) = a plastoquinol + NAD(+) + n H(+)(out). The catalysed reaction is a plastoquinone + NADPH + (n+1) H(+)(in) = a plastoquinol + NADP(+) + n H(+)(out). Its function is as follows. NDH shuttles electrons from NAD(P)H:plastoquinone, via FMN and iron-sulfur (Fe-S) centers, to quinones in the photosynthetic chain and possibly in a chloroplast respiratory chain. The immediate electron acceptor for the enzyme in this species is believed to be plastoquinone. Couples the redox reaction to proton translocation, and thus conserves the redox energy in a proton gradient. This is NAD(P)H-quinone oxidoreductase subunit K, chloroplastic from Trachelium caeruleum (Blue throatwort).